A 55-amino-acid chain; its full sequence is Photosystem II reaction center protein K (55 aa).

The propeptide occupies 1-18; sequence MFNIYLENAFYLNGITFA. A helical transmembrane segment spans residues 26–46; the sequence is IFDPIVDVMPIIPLFFFLLAF.

This sequence belongs to the PsbK family. As to quaternary structure, PSII is composed of 1 copy each of membrane proteins PsbA, PsbB, PsbC, PsbD, PsbE, PsbF, PsbH, PsbI, PsbJ, PsbK, PsbL, PsbM, PsbT, PsbX, PsbY, PsbZ, Psb30/Ycf12, at least 3 peripheral proteins of the oxygen-evolving complex and a large number of cofactors. It forms dimeric complexes.

It is found in the plastid. Its subcellular location is the chloroplast thylakoid membrane. One of the components of the core complex of photosystem II (PSII). PSII is a light-driven water:plastoquinone oxidoreductase that uses light energy to abstract electrons from H(2)O, generating O(2) and a proton gradient subsequently used for ATP formation. It consists of a core antenna complex that captures photons, and an electron transfer chain that converts photonic excitation into a charge separation. The polypeptide is Photosystem II reaction center protein K (Marchantia polymorpha (Common liverwort)).